A 432-amino-acid chain; its full sequence is Phosphomethylpyrimidine synthase (432 aa).

Substrate is bound by residues Asn-66, Met-95, Tyr-124, His-163, 185 to 187 (SRG), 226 to 229 (DGLR), and Glu-265. His-269 contacts Zn(2+). Residue Tyr-292 coordinates substrate. A Zn(2+)-binding site is contributed by His-333. 3 residues coordinate [4Fe-4S] cluster: Cys-409, Cys-412, and Cys-416.

Belongs to the ThiC family. The cofactor is [4Fe-4S] cluster.

It carries out the reaction 5-amino-1-(5-phospho-beta-D-ribosyl)imidazole + S-adenosyl-L-methionine = 4-amino-2-methyl-5-(phosphooxymethyl)pyrimidine + CO + 5'-deoxyadenosine + formate + L-methionine + 3 H(+). It functions in the pathway cofactor biosynthesis; thiamine diphosphate biosynthesis. In terms of biological role, catalyzes the synthesis of the hydroxymethylpyrimidine phosphate (HMP-P) moiety of thiamine from aminoimidazole ribotide (AIR) in a radical S-adenosyl-L-methionine (SAM)-dependent reaction. The chain is Phosphomethylpyrimidine synthase from Thermoanaerobacter pseudethanolicus (strain ATCC 33223 / 39E) (Clostridium thermohydrosulfuricum).